We begin with the raw amino-acid sequence, 625 residues long: Interleukin-1 receptor-associated kinase-like 2 (625 aa).

The 82-residue stretch at Leu-13–Lys-94 folds into the Death domain. Residues Lys-111–Ser-181 form a disordered region. Ser-144 bears the Phosphoserine mark. Residues Leu-169–Ser-181 are compositionally biased toward polar residues. Residues Phe-210–Leu-503 form the Protein kinase domain. ATP-binding positions include Ile-216–Val-224, Lys-237, and Lys-337–Asn-340. Positions Ser-513–Ala-539 are disordered. Residues Ser-516 to Pro-526 show a composition bias toward polar residues.

Belongs to the protein kinase superfamily. TKL Ser/Thr protein kinase family. Pelle subfamily. As to quaternary structure, interacts with MYD88. IL-1 stimulation leads to the formation of a signaling complex which dissociates from the IL-1 receptor following the binding of PELI1.

Functionally, binds to the IL-1 type I receptor following IL-1 engagement, triggering intracellular signaling cascades leading to transcriptional up-regulation and mRNA stabilization. This Pongo abelii (Sumatran orangutan) protein is Interleukin-1 receptor-associated kinase-like 2 (IRAK2).